A 40-amino-acid chain; its full sequence is Unknown protein from spot 207 of 2D-PAGE of etiolated coleoptile (40 aa).

This sequence belongs to the GST superfamily. HSP26 family.

The sequence is that of Unknown protein from spot 207 of 2D-PAGE of etiolated coleoptile from Zea mays (Maize).